The sequence spans 68 residues: uncharacterized protein (68 aa).

Residues Met1–Lys68 are disordered. The span at Ser9–Lys34 shows a compositional bias: basic and acidic residues. Over residues Asp42 to Glu51 the composition is skewed to acidic residues.

This is an uncharacterized protein from Dictyostelium discoideum (Social amoeba).